A 68-amino-acid polypeptide reads, in one-letter code: P21 prophage-derived head-stabilizing protein (68 aa).

Belongs to the lambda phage gpW family.

In Escherichia coli O6:H1 (strain CFT073 / ATCC 700928 / UPEC), this protein is P21 prophage-derived head-stabilizing protein.